The following is a 317-amino-acid chain: tRNA dimethylallyltransferase (317 aa).

14–21 (GPTASGKS) is a binding site for ATP. 16-21 (TASGKS) contributes to the substrate binding site. Interaction with substrate tRNA stretches follow at residues 39-42 (DSVL) and 163-167 (QRIQR).

The protein belongs to the IPP transferase family. In terms of assembly, monomer. The cofactor is Mg(2+).

The enzyme catalyses adenosine(37) in tRNA + dimethylallyl diphosphate = N(6)-dimethylallyladenosine(37) in tRNA + diphosphate. In terms of biological role, catalyzes the transfer of a dimethylallyl group onto the adenine at position 37 in tRNAs that read codons beginning with uridine, leading to the formation of N6-(dimethylallyl)adenosine (i(6)A). The chain is tRNA dimethylallyltransferase from Xylella fastidiosa (strain M23).